A 138-amino-acid chain; its full sequence is Basic phospholipase A2 Tbo-G6D49 (138 aa).

A signal peptide spans 1-16 (MRTLWIMAVLLVGVEG). Disulfide bonds link C42–C131, C44–C60, C59–C111, C65–C138, C66–C104, C73–C97, and C91–C102. Residues Y43, G45, and G47 each coordinate Ca(2+). H63 is an active-site residue. Position 64 (D64) interacts with Ca(2+). The active site involves D105.

Monomer. It depends on Ca(2+) as a cofactor. Expressed by the venom gland.

The protein resides in the secreted. The enzyme catalyses a 1,2-diacyl-sn-glycero-3-phosphocholine + H2O = a 1-acyl-sn-glycero-3-phosphocholine + a fatty acid + H(+). Functionally, snake venom phospholipase A2 (PLA2) that impairs hemostasis. It weakly inhibits ADP-induced platelet aggregation when tested on platelet rich plasma from human and rabbit blood (15-25% of inhibition at 5-10 ug of enzyme), and dose-dependently inhibits blood coagulation, possibly by inhibiting thrombin activation. Exhibits strong hydrolytic activities toward L-dipalmitoyl phosphatidylcholine. PLA2 catalyzes the calcium-dependent hydrolysis of the 2-acyl groups in 3-sn-phosphoglycerides. In Craspedocephalus borneensis (Borneo pit viper), this protein is Basic phospholipase A2 Tbo-G6D49.